A 360-amino-acid chain; its full sequence is BLOC-1-related complex subunit 6 (360 aa).

The segment at 1-201 is disordered; the sequence is MEAAQGRLGP…TGAGGGRRAT (201 aa). The span at 23–33 shows a compositional bias: polar residues; sequence ATFSGRPSRTP. Thr41 bears the Phosphothreonine mark. Ser130 is subject to Phosphoserine. The span at 144–155 shows a compositional bias: acidic residues; the sequence is EGDDDDDEDEEA. Ser173 carries the post-translational modification Phosphoserine. The segment covering 179–198 has biased composition (gly residues); that stretch reads GACGGGGSSSSGETGAGGGR. Thr201 carries the phosphothreonine modification. Ser204 bears the Phosphoserine mark.

It belongs to the BORCS6 family. As to quaternary structure, component of the BLOC-one-related complex (BORC) which is composed of BLOC1S1, BLOC1S2, BORCS5, BORCS6, BORCS7, BORCS8, KXD1 and SNAPIN.

Its subcellular location is the lysosome membrane. In terms of biological role, as part of the BORC complex may play a role in lysosomes movement and localization at the cell periphery. Associated with the cytosolic face of lysosomes, the BORC complex may recruit ARL8B and couple lysosomes to microtubule plus-end-directed kinesin motor. The chain is BLOC-1-related complex subunit 6 from Mus musculus (Mouse).